Reading from the N-terminus, the 400-residue chain is Dehydrogenase efuE (400 aa).

NAD(+)-binding positions include 222–223, 303–305, and D329; these read AI and TAR. Residue R305 is part of the active site. The active site involves E334. The active-site Proton donor is H352. 352–355 is a binding site for NAD(+); sequence HLGG.

The protein belongs to the D-isomer specific 2-hydroxyacid dehydrogenase family.

It functions in the pathway secondary metabolite biosynthesis; terpenoid biosynthesis. Dehydrogenase; part of the gene cluster that mediates the biosynthesis of enfumafungin, a glycosylated fernene-type triterpenoid with potent antifungal activity, mediated by its interaction with beta-1,3-glucan synthase and the fungal cell wall. The pathway begins with the terpene cyclase-glycosyl transferase fusion protein that most likely uses 2,3-oxidosqualene as substrate and catalyzes glycosylation immediately after cyclization. The fernene glycoside then could be processed by the desaturase efuI which catalyzes isomerization of a double bond established by efuA to form the core structure. The latter would then undergo a series of hydroxylations in unknown order at C-2, C-19, C-23 and C-25, which would be catalyzed by two of the three cytochrome P450 monooxygenases efuB, efuG or efuH. The hydroxy-group at C-25 becomes oxidized by the dehydrogenase efuE to enable a spontaneous, non-enzymatic hemiacetal formation with C-23. After hydroxylation at C-2, acetylation by the acetyltransferase efuC takes place. The final steps in enfumafungin biosynthesis require expansion of the 5-membered ring by lactonization via a Baeyer-Villiger reaction mediated by one of the BGC's cytochrome P450 monooxygenases (efuB, efuG or efuH) followed by ring cleavage. This type of reaction would establish a double bond between C-20 and C-21 which could be reduced by the reductase efuL to form the final product. The polypeptide is Dehydrogenase efuE (Hormonema carpetanum).